Here is a 113-residue protein sequence, read N- to C-terminus: Major basic nuclear protein 1 (113 aa).

A disordered region spans residues 1–20 (MAPKMKAAMKAMKAPAMKGK).

It localises to the nucleus. The chain is Major basic nuclear protein 1 (HCc1) from Crypthecodinium cohnii (Dinoflagellate).